The following is a 292-amino-acid chain: MSGMEATVTIPIWQNKPHGAARSVVRRIGTNLPLKPCARASFETLPNISDLCLRDVPPVPTLADIAWIAADEEETYARVRSDTRPLRHTWKPSPLIVMQRNASVPNLRGSEERLLALKKPALPALSRTTELQDELSHLRSQIAKIVAADAASASLTPDFLSPGSSNVSSPLPCFGSSFHSTTSFVISDITEETEVEVPELPSVPLLCSASPECCKPEHKAACSSSEEDDCVSLSKASSFADMMGILKDFHRMKQSQDLNRSLLKEEDPAVLISEVLRRKFALKEEDISRKGN.

A Phosphothreonine modification is found at Thr-30. At Ser-41 the chain carries Phosphoserine. Ser-103 carries the phosphoserine; by AMPK modification. Residues Ser-110, Ser-224, and Ser-225 each carry the phosphoserine modification. Position 238 is a phosphoserine; by AMPK (Ser-238). A phosphoserine mark is found at Ser-261 and Ser-273.

The protein belongs to the MTFR1 family. Phosphorylated by AMPK. Upon stress, phosphorylation at Ser-103 and Ser-238 by AMPK is sufficient to induce mitochondrial fragmentation.

The protein localises to the mitochondrion outer membrane. Mitochondrial protein required for adaptation of miochondrial dynamics to metabolic changes. Regulates mitochondrial morphology at steady state and mediates AMPK-dependent stress-induced mitochondrial fragmentation via the control of OPA1 levels. The sequence is that of Mitochondrial fission regulator 1-like from Homo sapiens (Human).